The chain runs to 98 residues: Integration host factor subunit alpha (98 aa).

The segment at 49–71 is disordered; it reads FGNFDLRDKNQRPGRNPKTGEDI.

It belongs to the bacterial histone-like protein family. In terms of assembly, heterodimer of an alpha and a beta chain.

This protein is one of the two subunits of integration host factor, a specific DNA-binding protein that functions in genetic recombination as well as in transcriptional and translational control. In Shewanella sp. (strain MR-4), this protein is Integration host factor subunit alpha.